We begin with the raw amino-acid sequence, 715 residues long: Arginine kinase (715 aa).

2 Approximate repeats span residues 1–366 (MADP…IAKK) and 367–715 (RSVF…KSTK). The Phosphagen kinase N-terminal 1 domain occupies 11 to 95 (KSKNAFPDPL…FDAIIEDYHS (85 aa)). Position 68–72 (68–72 (GVGVY)) interacts with substrate. The Phosphagen kinase C-terminal 1 domain occupies 123 to 362 (YIRSTRIRVA…KALMELEKEA (240 aa)). ATP-binding positions include 126-130 (STRIR) and histidine 189. Glutamate 229 serves as a coordination point for substrate. Arginine 233 contacts ATP. Residue cysteine 275 coordinates substrate. ATP contacts are provided by residues 284-288 (RASVH) and 312-317 (RGIHGE). Glutamate 317 is a substrate binding site. Positions 365 to 447 (KKRSVFPEVL…FDKIVEDYHS (83 aa)) constitute a Phosphagen kinase N-terminal 2 domain. One can recognise a Phosphagen kinase C-terminal 2 domain in the interval 475–714 (YIRSTRIRVA…KKLLEIEKST (240 aa)).

Belongs to the ATP:guanido phosphotransferase family. In terms of assembly, monomer.

It carries out the reaction L-arginine + ATP = N(omega)-phospho-L-arginine + ADP + H(+). The sequence is that of Arginine kinase from Anthopleura japonica (Sea anemone).